Reading from the N-terminus, the 1876-residue chain is Phenolphthiocerol/phthiocerol polyketide synthase subunit A (1876 aa).

In terms of domain architecture, Carrier 1 spans 9-83; it reads ADLRHWLIDY…ALAAYLAAPE (75 aa). At S43 the chain carries O-(pantetheine 4'-phosphoryl)serine. A Ketosynthase family 3 (KS3) domain is found at 101–526; the sequence is DEPIAVVGMG…GTNAHVVIEQ (426 aa). Catalysis depends on for beta-ketoacyl synthase activity residues C273, H408, and H448. The interval 626–950 is acyltransferase; it reads SPGPGTVFVY…NLNKAHTIHP (325 aa). Catalysis depends on S720, which acts as the For malonyltransferase activity. An N-terminal hotdog fold region spans residues 997-1112; the sequence is HTTVATVSAS…AQLSSSPSDS (116 aa). The 271-residue stretch at 997–1267 folds into the PKS/mFAS DH domain; the sequence is HTTVATVSAS…YRALDFGLDV (271 aa). H1027 (proton acceptor; for dehydratase activity) is an active-site residue. Residues 1102–1130 are disordered; the sequence is TAQLSSSPSDSASSLNEHHRANGQPPERA. Positions 1106–1115 are enriched in low complexity; it reads SSSPSDSASS. The interval 1130-1267 is C-terminal hotdog fold; that stretch reads AHRDLIPDLA…YRALDFGLDV (138 aa). D1186 (proton donor; for dehydratase activity) is an active-site residue. 1491–1551 contributes to the NADP(+) binding site; the sequence is AAYLITGGLG…RRRIDAIRAL (61 aa). Residues 1491-1728 form a beta-ketoacyl reductase region; sequence AAYLITGGLG…DGYDVAQAVV (238 aa). Residues 1759 to 1836 enclose the Carrier 2 domain; that stretch reads EVRSELEQGL…SLASYLAKRV (78 aa). An O-(pantetheine 4'-phosphoryl)serine modification is found at S1796.

The cofactor is NADP(+). Pantetheine 4'-phosphate serves as cofactor.

The catalysed reaction is icosanoyl-[(phenol)carboxyphthiodiolenone synthase] + 2 (S)-methylmalonyl-CoA + 3 malonyl-CoA + 5 NADPH + 10 H(+) = C32-carboxyphthiodiolenone-[(phenol)carboxyphthiodiolenone synthase] + 5 CO2 + 5 NADP(+) + 5 CoA + 2 H2O. It catalyses the reaction docosanoyl-[(phenol)carboxyphthiodiolenone synthase] + 2 (S)-methylmalonyl-CoA + 3 malonyl-CoA + 5 NADPH + 10 H(+) = C34-carboxyphthiodiolenone-[(phenol)carboxyphthiodiolenone synthase] + 5 CO2 + 5 NADP(+) + 5 CoA + 2 H2O. It carries out the reaction 17-(4-hydroxyphenyl)heptadecanoyl-[(phenol)carboxyphthiodiolenone synthase] + 2 (S)-methylmalonyl-CoA + 3 malonyl-CoA + 5 NADPH + 10 H(+) = C35-(phenol)carboxyphthiodiolenone-[(phenol)carboxyphthiodiolenone synthase] + 5 CO2 + 5 NADP(+) + 5 CoA + 2 H2O. The enzyme catalyses 19-(4-hydroxyphenyl)nonadecanoyl-[(phenol)carboxyphthiodiolenone synthase] + 2 (S)-methylmalonyl-CoA + 3 malonyl-CoA + 5 NADPH + 10 H(+) = C37-(phenol)carboxyphthiodiolenone-[(phenol)carboxyphthiodiolenone synthase] + 5 CO2 + 5 NADP(+) + 5 CoA + 2 H2O. It functions in the pathway lipid metabolism; fatty acid biosynthesis. Its function is as follows. Part of the PpsABCDE complex involved in the biosynthesis of the lipid core common to phthiocerols and phenolphthiocerols by successive additions of malonyl-CoA or methylmalonyl-CoA extender units. PpsA can accept as substrate the activated forms of either icosanoyl (C20), docosanoyl (C22) or lignoceroyl (C24) groups from FadD26, or a (4-hydroxyphenyl)-C17 or (4-hydroxyphenyl)-C19 fatty acyl from FadD29. PpsA initiates the biosynthesis and extends its substrate using a malonyl-CoA extender unit. The PpsB and PpsC proteins add the second and third malonyl-CoA extender units. PpsD adds an (R)-methylmalonyl unit and PpsE adds a second (R)-methylmalonyl unit. The incorporation of the methylmalonyl units results in formation of two branched methyl groups in the elongated product. The polypeptide is Phenolphthiocerol/phthiocerol polyketide synthase subunit A (ppsA) (Mycobacterium tuberculosis (strain CDC 1551 / Oshkosh)).